The following is a 365-amino-acid chain: Methylthioribose-1-phosphate isomerase (365 aa).

Substrate contacts are provided by residues 53–55 (RGA), Arg-90, and Gln-201. Asp-242 functions as the Proton donor in the catalytic mechanism. 252–253 (NK) provides a ligand contact to substrate.

The protein belongs to the eIF-2B alpha/beta/delta subunits family. MtnA subfamily.

The catalysed reaction is 5-(methylsulfanyl)-alpha-D-ribose 1-phosphate = 5-(methylsulfanyl)-D-ribulose 1-phosphate. Its pathway is amino-acid biosynthesis; L-methionine biosynthesis via salvage pathway; L-methionine from S-methyl-5-thio-alpha-D-ribose 1-phosphate: step 1/6. Its function is as follows. Catalyzes the interconversion of methylthioribose-1-phosphate (MTR-1-P) into methylthioribulose-1-phosphate (MTRu-1-P). This is Methylthioribose-1-phosphate isomerase from Methylorubrum extorquens (strain CM4 / NCIMB 13688) (Methylobacterium extorquens).